The primary structure comprises 1341 residues: DNA-directed RNA polymerase subunit beta (1341 aa).

The protein belongs to the RNA polymerase beta chain family. In terms of assembly, the RNAP catalytic core consists of 2 alpha, 1 beta, 1 beta' and 1 omega subunit. When a sigma factor is associated with the core the holoenzyme is formed, which can initiate transcription.

It catalyses the reaction RNA(n) + a ribonucleoside 5'-triphosphate = RNA(n+1) + diphosphate. In terms of biological role, DNA-dependent RNA polymerase catalyzes the transcription of DNA into RNA using the four ribonucleoside triphosphates as substrates. The protein is DNA-directed RNA polymerase subunit beta of Blochmanniella pennsylvanica (strain BPEN).